The sequence spans 636 residues: Chaperone protein DnaK (636 aa).

The residue at position 203 (threonine 203) is a Phosphothreonine; by autocatalysis. The segment at 602 to 636 (VYGKQQEGAPAQEEPSAEGKKADDEGTVEGEFREV) is disordered. The span at 618–636 (AEGKKADDEGTVEGEFREV) shows a compositional bias: basic and acidic residues.

The protein belongs to the heat shock protein 70 family.

Its function is as follows. Acts as a chaperone. In Dehalococcoides mccartyi (strain CBDB1), this protein is Chaperone protein DnaK.